Consider the following 669-residue polypeptide: DNA mismatch repair protein MutL (669 aa).

The segment at 356-382 is disordered; it reads FEQRQNTENNQEKTFSSEESNSKPFME. A compositionally biased stretch (polar residues) spans 361–378; that stretch reads NTENNQEKTFSSEESNSK.

This sequence belongs to the DNA mismatch repair MutL/HexB family.

Its function is as follows. This protein is involved in the repair of mismatches in DNA. It is required for dam-dependent methyl-directed DNA mismatch repair. May act as a 'molecular matchmaker', a protein that promotes the formation of a stable complex between two or more DNA-binding proteins in an ATP-dependent manner without itself being part of a final effector complex. This is DNA mismatch repair protein MutL from Staphylococcus aureus (strain USA300).